The chain runs to 434 residues: Bifunctional protein GlmU (434 aa).

Residues 1 to 226 (MNKNKISIVI…ENEYKGVNSK (226 aa)) are pyrophosphorylase. Residues 11 to 14 (LAAG), lysine 25, glutamine 77, and 84 to 85 (GT) contribute to the UDP-N-acetyl-alpha-D-glucosamine site. Aspartate 105 provides a ligand contact to Mg(2+). Residues glycine 138, glutamate 152, asparagine 167, and asparagine 224 each contribute to the UDP-N-acetyl-alpha-D-glucosamine site. Asparagine 224 is a Mg(2+) binding site. The interval 227 to 247 (KDLSDAEIIMQDKIKNSLMES) is linker. An N-acetyltransferase region spans residues 248-434 (GVTMQLPSTI…DFYYKFFAKK (187 aa)). Residues arginine 311 and lysine 328 each coordinate UDP-N-acetyl-alpha-D-glucosamine. Histidine 339 serves as the catalytic Proton acceptor. 2 residues coordinate UDP-N-acetyl-alpha-D-glucosamine: tyrosine 342 and asparagine 353. Acetyl-CoA is bound by residues alanine 356, 362–363 (NY), serine 381, and alanine 399.

The protein in the N-terminal section; belongs to the N-acetylglucosamine-1-phosphate uridyltransferase family. In the C-terminal section; belongs to the transferase hexapeptide repeat family. In terms of assembly, homotrimer. The cofactor is Mg(2+).

The protein localises to the cytoplasm. The catalysed reaction is alpha-D-glucosamine 1-phosphate + acetyl-CoA = N-acetyl-alpha-D-glucosamine 1-phosphate + CoA + H(+). It carries out the reaction N-acetyl-alpha-D-glucosamine 1-phosphate + UTP + H(+) = UDP-N-acetyl-alpha-D-glucosamine + diphosphate. The protein operates within nucleotide-sugar biosynthesis; UDP-N-acetyl-alpha-D-glucosamine biosynthesis; N-acetyl-alpha-D-glucosamine 1-phosphate from alpha-D-glucosamine 6-phosphate (route II): step 2/2. It functions in the pathway nucleotide-sugar biosynthesis; UDP-N-acetyl-alpha-D-glucosamine biosynthesis; UDP-N-acetyl-alpha-D-glucosamine from N-acetyl-alpha-D-glucosamine 1-phosphate: step 1/1. It participates in bacterial outer membrane biogenesis; LPS lipid A biosynthesis. Functionally, catalyzes the last two sequential reactions in the de novo biosynthetic pathway for UDP-N-acetylglucosamine (UDP-GlcNAc). The C-terminal domain catalyzes the transfer of acetyl group from acetyl coenzyme A to glucosamine-1-phosphate (GlcN-1-P) to produce N-acetylglucosamine-1-phosphate (GlcNAc-1-P), which is converted into UDP-GlcNAc by the transfer of uridine 5-monophosphate (from uridine 5-triphosphate), a reaction catalyzed by the N-terminal domain. This is Bifunctional protein GlmU from Sulfurimonas denitrificans (strain ATCC 33889 / DSM 1251) (Thiomicrospira denitrificans (strain ATCC 33889 / DSM 1251)).